Here is a 197-residue protein sequence, read N- to C-terminus: Ribose 1,5-bisphosphate phosphokinase PhnN (197 aa).

21 to 28 provides a ligand contact to ATP; the sequence is GPSGAGKD.

The protein belongs to the ribose 1,5-bisphosphokinase family.

The catalysed reaction is alpha-D-ribose 1,5-bisphosphate + ATP = 5-phospho-alpha-D-ribose 1-diphosphate + ADP. Its pathway is metabolic intermediate biosynthesis; 5-phospho-alpha-D-ribose 1-diphosphate biosynthesis; 5-phospho-alpha-D-ribose 1-diphosphate from D-ribose 5-phosphate (route II): step 3/3. Catalyzes the phosphorylation of ribose 1,5-bisphosphate to 5-phospho-D-ribosyl alpha-1-diphosphate (PRPP). This Rhizobium etli (strain CIAT 652) protein is Ribose 1,5-bisphosphate phosphokinase PhnN.